Here is a 485-residue protein sequence, read N- to C-terminus: RAC-beta serine/threonine-protein kinase B (485 aa).

The PH domain occupies 5 to 109; sequence MVIKEGWLQK…WIIAIQTVAN (105 aa). 2 O-linked (GlcNAc) serine glycosylation sites follow: S132 and S135. Residues 156-413 form the Protein kinase domain; it reads FDYLKLLGKG…AQEVMSHGFF (258 aa). Residues 162–170 and K185 contribute to the ATP site; that span reads LGKGTFGKV. The active-site Proton acceptor is the D279. T310 carries O-linked (GlcNAc) threonine glycosylation. T313 carries the post-translational modification Phosphothreonine. T317 is a glycosylation site (O-linked (GlcNAc) threonine). The 72-residue stretch at 414–485 folds into the AGC-kinase C-terminal domain; sequence ASINWQDVTE…QFSYSSSIRE (72 aa). A disordered region spans residues 454-485; sequence LTPPDRYDNLDALESEQRPHFPQFSYSSSIRE. The span at 458 to 472 shows a compositional bias: basic and acidic residues; sequence DRYDNLDALESEQRP. At S478 the chain carries Phosphoserine. Residue S478 is glycosylated (O-linked (GlcNAc) serine; alternate).

Belongs to the protein kinase superfamily. AGC Ser/Thr protein kinase family. RAC subfamily. Phosphorylation on Thr-313 and Ser-478 is required for full activity. Phosphorylation of the activation loop at Thr-313 by PDPK1/PDK1 is a prerequisite for full activation. Phosphorylation by mTORC2 at Ser-478 in response to growth factors plays a key role in AKT1 activation by facilitating subsequent phosphorylation of the activation loop by PDPK1/PDK1.

The catalysed reaction is L-seryl-[protein] + ATP = O-phospho-L-seryl-[protein] + ADP + H(+). The enzyme catalyses L-threonyl-[protein] + ATP = O-phospho-L-threonyl-[protein] + ADP + H(+). With respect to regulation, two specific sites, one in the kinase domain (Thr-313) and the other in the C-terminal regulatory region (Ser-478), need to be phosphorylated for its full activation. In terms of biological role, akt2-b is one of several closely related serine/threonine-protein kinases known as the AKT kinase, and which regulate many processes including metabolism, proliferation, cell survival, growth and angiogenesis. This is mediated through serine and/or threonine phosphorylation of a range of downstream substrates. Over 100 substrate candidates have been reported so far, but for most of them, no isoform specificity has been reported. May be involved in the inhibition of ciliogenesis. In Xenopus laevis (African clawed frog), this protein is RAC-beta serine/threonine-protein kinase B (akt2-b).